Here is a 211-residue protein sequence, read N- to C-terminus: DNA-directed RNA polymerases I, II, and III subunit RPABC1 (211 aa).

It belongs to the archaeal Rpo5/eukaryotic RPB5 RNA polymerase subunit family. Component of the RNA polymerase I (Pol I), RNA polymerase II (Pol II) and RNA polymerase III (Pol III) complexes consisting of at least 13, 12 and 17 subunits, respectively. In RNA Pol II, this subunit is present in 2-fold molar excess over the other subunits.

Its subcellular location is the nucleus. Functionally, DNA-dependent RNA polymerase catalyzes the transcription of DNA into RNA using the four ribonucleoside triphosphates as substrates. Common component of RNA polymerases I, II and III which synthesize ribosomal RNA precursors, mRNA precursors and many functional non-coding RNAs, and small RNAs, such as 5S rRNA and tRNAs, respectively. Pol II is the central component of the basal RNA polymerase II transcription machinery. Pols are composed of mobile elements that move relative to each other. In Pol II, RPB5 is part of the lower jaw surrounding the central large cleft and thought to grab the incoming DNA template. Seems to be the major component in this process. This chain is DNA-directed RNA polymerases I, II, and III subunit RPABC1, found in Caenorhabditis briggsae.